Here is a 264-residue protein sequence, read N- to C-terminus: Virulence plasmid protein pGP3-D (264 aa).

The protein is Virulence plasmid protein pGP3-D of Chlamydia psittaci (Chlamydophila psittaci).